Reading from the N-terminus, the 126-residue chain is Small ribosomal subunit protein uS11 (126 aa).

This sequence belongs to the universal ribosomal protein uS11 family. In terms of assembly, part of the 30S ribosomal subunit. Interacts with proteins S7 and S18. Binds to IF-3.

Its function is as follows. Located on the platform of the 30S subunit, it bridges several disparate RNA helices of the 16S rRNA. Forms part of the Shine-Dalgarno cleft in the 70S ribosome. The polypeptide is Small ribosomal subunit protein uS11 (Ehrlichia chaffeensis (strain ATCC CRL-10679 / Arkansas)).